A 1870-amino-acid chain; its full sequence is RNA1 polyprotein (1870 aa).

An SF3 helicase domain is found at 486 to 654; that stretch reads LEKLIELHNS…VPYNADDPCA (169 aa). Position 515-522 (515-522) interacts with ATP; the sequence is GASGTGKT. The chain crosses the membrane as a helical span at residues 910-930; sequence SLWCMSGDASFVAGAATVFSV. Ser-937 bears the O-(5'-phospho-RNA)-serine mark. Residues 963-1165 enclose the Peptidase C3 domain; sequence SSCFGDSALW…ASFMPYHASL (203 aa). Catalysis depends on for picornain 3C-like protease activity residues His-1003, Glu-1039, and Cys-1128. The RdRp catalytic domain maps to 1445-1572; the sequence is NNILCCDYSR…SVSDAISSRF (128 aa).

Post-translationally, specific enzymatic cleavages by picornain 3C-like protease in vivo yield mature proteins. Picornain 3C-like protease is autocatalytically processed. Uridylylated by the polymerase and is covalently linked to the 5'-end of genomic RNA. This uridylylated form acts as a nucleotide-peptide primer for the polymerase.

It is found in the host membrane. It localises to the host cytoplasm. The protein resides in the host perinuclear region. The protein localises to the host endoplasmic reticulum. The enzyme catalyses RNA(n) + a ribonucleoside 5'-triphosphate = RNA(n+1) + diphosphate. Functionally, thiol protease that cleaves the RNA1 and RNA2 polyproteins. Its function is as follows. Plays a role in RNA replication. It is covalently linked to the 5'terminus of both viral single-stranded RNA1 and RNA2 molecules. Down-regulates the RNA1 polyprotein processing and enhances trans-cleavage of RNA2 polyproteins. The protease cofactor and the putative helicase seem to target the replication complexes to ER membranes. Their physical association causes the membrane rearrangement of host ER that may result in formation of the small membranous vesicles that are the site of viral RNA synthesis. In terms of biological role, the protease cofactor and the putative helicase seem to target the replication complexes to ER membranes. Their physical association causes the membrane rearrangement of host ER that may result in formation of the small membranous vesicles that are the site of viral RNA synthesis. Functionally, replicates the viral genome. In Broad bean wilt virus 2 (BBWV-2), this protein is RNA1 polyprotein.